The sequence spans 94 residues: Co-chaperonin GroES (94 aa).

It belongs to the GroES chaperonin family. As to quaternary structure, heptamer of 7 subunits arranged in a ring. Interacts with the chaperonin GroEL.

The protein localises to the cytoplasm. Together with the chaperonin GroEL, plays an essential role in assisting protein folding. The GroEL-GroES system forms a nano-cage that allows encapsulation of the non-native substrate proteins and provides a physical environment optimized to promote and accelerate protein folding. GroES binds to the apical surface of the GroEL ring, thereby capping the opening of the GroEL channel. This is Co-chaperonin GroES from Lactobacillus delbrueckii subsp. bulgaricus (strain ATCC BAA-365 / Lb-18).